The following is a 291-amino-acid chain: Hydroxysteroid 11-beta-dehydrogenase 1-like protein A (291 aa).

A signal peptide spans 1 to 18 (MAGVKLLLLSLCVGYTAY). Residues 40-66 (GSST…TARR), 91-92 (DM), and 118-120 (NHI) each bind NADP(+). Residue Ser170 participates in substrate binding. The active-site Proton acceptor is the Tyr183. Residues 183–187 (YCASK) and 216–222 (GYIDTEN) each bind NADP(+).

The protein belongs to the short-chain dehydrogenases/reductases (SDR) family.

The protein localises to the secreted. The catalysed reaction is cortisone + NADPH + H(+) = cortisol + NADP(+). Functionally, unidirectional NADP(+)-dependent cortisol dehydrogenase (in vitro). The protein is Hydroxysteroid 11-beta-dehydrogenase 1-like protein A (hsd11b1l-a) of Xenopus laevis (African clawed frog).